The sequence spans 867 residues: Zinc finger protein zfp-1 (867 aa).

Residues 5-57 (VGGCCVCADENGWTDNPLIYCDGENCEVAVHQGCYGIQEVPEGEWFCAKCTKA) form a PHD-type 1 zinc finger. The C2HC pre-PHD-type 2 zinc finger occupies 69–102 (TFCCQLCPFDYGALKKTDRNGWAHVICALYIPEV). An extended PHD2 domain (ePHD2) region spans residues 69-186 (TFCCQLCPFD…KYCGYCENHL (118 aa)). The PHD-type 2 zinc-finger motif lies at 125–186 (KLCYICNEER…KYCGYCENHL (62 aa)). 4 disordered regions span residues 267 to 311 (GSTV…SLSS), 440 to 477 (KNDM…GKSP), 503 to 586 (ADRT…QSNR), and 753 to 773 (SSGA…STAG). The segment covering 285 to 311 (PLTTSSRSSVAQDPSPPLTINKNSLSS) has biased composition (polar residues). The span at 503 to 512 (ADRTAAERRA) shows a compositional bias: basic and acidic residues. Over residues 516–527 (QSQPSTSTNGGP) the composition is skewed to polar residues. Positions 538 to 550 (HTNSTNSTNHQNN) are enriched in low complexity. Positions 551–573 (GLTQNAPASTSMQAGTSSNDGVI) are enriched in polar residues. Residues 574 to 585 (SQNGTSSTSQSN) are compositionally biased toward low complexity. A compositionally biased stretch (polar residues) spans 758-771 (VNSNIQNHRATPST).

In terms of assembly, multimer; in vitro. Interacts (via C-terminus) with dot-1.1 to form a heterodimer known as the zfp-1-dot-1.1 complex or DotCom complex. In terms of tissue distribution, isoform a: Expressed at high levels in maturing oocytes, but at low levels in the rest of the germ line (at protein level). Isoform a: Not expressed in the pharynx, germ line and tail. Isoform c: Not expressed in the germ line (at protein level). Isoform c: Uniformly expressed.

It is found in the nucleus. The protein resides in the chromosome. Recruits the histone methyltransferase dot-1.1 to chromatin to methylate 'Lys-79' of histone H3 and activate transcription. Recognizes and binds histone H3 methylated at 'Lys-4' (H3K4me) at the promoters of target genes. During stress, the zfp-1-dot-1.1 complex also plays a role in the deubiquitination of histone H2B sites, which negatively modulates the RNA polymerase II-induced transcription of highly expressed genes. In response to stress, binds to the pdk-1 promoter to negatively regulate pdk-1 expression, which negatively modulates daf-16/FOXO-mediated gene expression. Thus, most likely via this mechanism, in response to stress, it confers a protective role against neuronal necrosis. Plays a role in Insulin/IGF-1-like signaling (IIS)- and diet restriction-mediated lifespan extension by controlling daf-16/FOXO and pha-4/FOXA recruitment to target promoters. May negatively regulate the expression of genes required for vulval development. May play a role in axon guidance in D-type motor neurons. May suppress sensitivity to RNAi. Functionally, required for migration of HSN motor neurons during embryogenesis. This chain is Zinc finger protein zfp-1, found in Caenorhabditis elegans.